The following is a 1159-amino-acid chain: RNA-directed RNA polymerase (1159 aa).

A RdRp catalytic domain is found at 545-727 (LTYGVLAEDT…KALASYTGLE (183 aa)).

Belongs to the reoviridae RNA-directed RNA polymerase family. As to quaternary structure, interacts with VP3 (Potential). Interacts with VP2 (Potential). Interacts with NSP5; this interaction is probably necessary for the formation of functional virus factories.

The protein resides in the virion. The enzyme catalyses RNA(n) + a ribonucleoside 5'-triphosphate = RNA(n+1) + diphosphate. Its function is as follows. RNA-directed RNA polymerase that is involved in both transcription and genome replication. Together with VP3 capping enzyme, forms an enzyme complex positioned near the channels situated at each of the five-fold vertices of the core. Following infection, the outermost layer of the virus is lost, leaving a double-layered particle (DLP) made up of the core and VP6 shell. VP1 then catalyzes the transcription of fully conservative plus-strand genomic RNAs that are extruded through the DLP's channels into the cytoplasm where they function as mRNAs for translation of viral proteins. One copy of each of the viral (+)RNAs is also recruited during core assembly, together with newly synthesized polymerase complexes and VP2. The polymerase of these novo-formed particles catalyzes the synthesis of complementary minus-strands leading to dsDNA formation. To do so, the polymerase specifically recognizes conserved 3' sequence(s) in plus-strand RNA templates. Once dsRNA synthesis is complete, the polymerase switches to the transcriptional mode, thus providing secondary transcription. The chain is RNA-directed RNA polymerase from Homo sapiens (Human).